A 737-amino-acid chain; its full sequence is Polyribonucleotide nucleotidyltransferase (737 aa).

The Mg(2+) site is built by Asp-489 and Asp-495. Residues 556-615 (PKIDTIKIDVDKIKIVIGKGGETIDKIIAETGVKIDIDEEGNVSIYSSDQDAINRAKEII) form the KH domain. Positions 625 to 693 (DEVYRAKVVR…EKGRIDASMK (69 aa)) constitute an S1 motif domain. The tract at residues 691 to 737 (SMKALLPRPPKPEHDEKGEKSERPHRPRHHKDHKPKKEFTETPKDSE) is disordered. Residues 700-714 (PKPEHDEKGEKSERP) show a composition bias toward basic and acidic residues. The span at 715–724 (HRPRHHKDHK) shows a compositional bias: basic residues. The segment covering 725–737 (PKKEFTETPKDSE) has biased composition (basic and acidic residues).

Belongs to the polyribonucleotide nucleotidyltransferase family. Mg(2+) serves as cofactor.

It is found in the cytoplasm. The catalysed reaction is RNA(n+1) + phosphate = RNA(n) + a ribonucleoside 5'-diphosphate. Involved in mRNA degradation. Catalyzes the phosphorolysis of single-stranded polyribonucleotides processively in the 3'- to 5'-direction. This is Polyribonucleotide nucleotidyltransferase from Streptococcus pneumoniae (strain 70585).